The following is a 360-amino-acid chain: Glycerol-1-phosphate dehydrogenase [NAD(P)+] (360 aa).

NAD(+) is bound by residues 108–112 (GRVID) and 130–133 (TAAS). Asp135 serves as a coordination point for substrate. Residue Ser139 coordinates NAD(+). Asp182 contributes to the substrate binding site. Zn(2+) contacts are provided by Asp182 and His262. His266 serves as a coordination point for substrate. His278 contacts Zn(2+).

This sequence belongs to the glycerol-1-phosphate dehydrogenase family. The cofactor is Zn(2+).

The protein resides in the cytoplasm. The enzyme catalyses sn-glycerol 1-phosphate + NAD(+) = dihydroxyacetone phosphate + NADH + H(+). The catalysed reaction is sn-glycerol 1-phosphate + NADP(+) = dihydroxyacetone phosphate + NADPH + H(+). It participates in membrane lipid metabolism; glycerophospholipid metabolism. Catalyzes the NAD(P)H-dependent reduction of dihydroxyacetonephosphate (DHAP or glycerone phosphate) to glycerol 1-phosphate (G1P). The G1P thus generated is used as the glycerophosphate backbone of phospholipids in the cellular membranes of Archaea. This chain is Glycerol-1-phosphate dehydrogenase [NAD(P)+], found in Methanocorpusculum labreanum (strain ATCC 43576 / DSM 4855 / Z).